The primary structure comprises 729 residues: Phosphoribosylformylglycinamidine synthase subunit PurL (729 aa).

Residue H42 is part of the active site. ATP-binding residues include Y45 and K84. E86 contributes to the Mg(2+) binding site. Substrate is bound by residues S87 to H90 and R109. Catalysis depends on H88, which acts as the Proton acceptor. Mg(2+) is bound at residue D110. Position 238 (Q238) interacts with substrate. A Mg(2+)-binding site is contributed by D266. E310–Q312 contributes to the substrate binding site. Residues D492 and G529 each coordinate ATP. Residue N530 coordinates Mg(2+). S532 contacts substrate.

It belongs to the FGAMS family. As to quaternary structure, monomer. Part of the FGAM synthase complex composed of 1 PurL, 1 PurQ and 2 PurS subunits.

It localises to the cytoplasm. The catalysed reaction is N(2)-formyl-N(1)-(5-phospho-beta-D-ribosyl)glycinamide + L-glutamine + ATP + H2O = 2-formamido-N(1)-(5-O-phospho-beta-D-ribosyl)acetamidine + L-glutamate + ADP + phosphate + H(+). Its pathway is purine metabolism; IMP biosynthesis via de novo pathway; 5-amino-1-(5-phospho-D-ribosyl)imidazole from N(2)-formyl-N(1)-(5-phospho-D-ribosyl)glycinamide: step 1/2. In terms of biological role, part of the phosphoribosylformylglycinamidine synthase complex involved in the purines biosynthetic pathway. Catalyzes the ATP-dependent conversion of formylglycinamide ribonucleotide (FGAR) and glutamine to yield formylglycinamidine ribonucleotide (FGAM) and glutamate. The FGAM synthase complex is composed of three subunits. PurQ produces an ammonia molecule by converting glutamine to glutamate. PurL transfers the ammonia molecule to FGAR to form FGAM in an ATP-dependent manner. PurS interacts with PurQ and PurL and is thought to assist in the transfer of the ammonia molecule from PurQ to PurL. The sequence is that of Phosphoribosylformylglycinamidine synthase subunit PurL from Campylobacter curvus (strain 525.92).